We begin with the raw amino-acid sequence, 521 residues long: Na(+)/H(+) antiporter ApNhaP (521 aa).

Over 1 to 18 the chain is Periplasmic; that stretch reads MTIEAAMGEEAIKENLEQ. The helical transmembrane segment at 19–39 threads the bilayer; sequence FLIVLSVSLGVATLSQISSFF. At 40–41 the chain is on the cytoplasmic side; that stretch reads RQ. Residues 42 to 62 form a helical membrane-spanning segment; that stretch reads IPYTLLLVIVGLGLAFVDIRL. Over 63 to 94 the chain is Periplasmic; the sequence is VNLSPELILEIFLPPLLFEAAWNIRWRNLKKN. Residues 95–115 form a helical membrane-spanning segment; sequence LFPVVLLAIIGVVISVVGIGF. The Cytoplasmic portion of the chain corresponds to 116–126; that stretch reads SLNYFSGLSLP. The helical transmembrane segment at 127 to 147 threads the bilayer; it reads IALLVGAILAATDPVSVIALF. Residues 148–164 are Periplasmic-facing; that stretch reads RELGVGERLTVLMEGES. The chain crosses the membrane as a helical span at residues 165–185; sequence LFNDGVAVVAFSLLVGIPLGT. Topologically, residues 186-194 are cytoplasmic; that stretch reads QEFSVTNTL. The helical transmembrane segment at 195-215 threads the bilayer; that stretch reads IQFVTLQGIGIGCGGVIGFGI. The Periplasmic segment spans residues 216–245; that stretch reads SYLTQRFDLPLVEQSLTLVSAYGTYLITEE. A helical membrane pass occupies residues 246 to 266; it reads LGGSGVIGVVTVGLILGNFGS. Residues 267–276 lie on the Cytoplasmic side of the membrane; that stretch reads RIGMNPRTRL. A helical membrane pass occupies residues 277 to 297; the sequence is LVSEFWEFIAFFVNSIVFLLI. Topologically, residues 298–311 are periplasmic; sequence GDQINIRGLADNGQ. A helical membrane pass occupies residues 312 to 332; sequence LILITIIALVIIRAISIYGLG. The Cytoplasmic segment spans residues 333–349; it reads TISNLITKQDISWQEET. Residues 350-370 form a helical membrane-spanning segment; it reads VLWWGGLRGSVSIALALSVPV. Topologically, residues 371 to 380 are periplasmic; the sequence is MLDGRQDIIE. Residues 381–401 form a helical membrane-spanning segment; that stretch reads AVFGVVLFTLLVQGLTMQTVI. Over 402-521 the chain is Cytoplasmic; that stretch reads EKLGLIGDRA…LLQEVLAKPE (120 aa).

The protein belongs to the monovalent cation:proton antiporter 1 (CPA1) transporter (TC 2.A.36) family.

The protein localises to the cell inner membrane. Functionally, na(+)/H(+) antiporter that extrudes sodium in exchange for external protons. Also shows high Ca(2+)/H(+) antiporter activity at alkaline pH. Does not catalyze exchange between Li(+) and H(+). The protein is Na(+)/H(+) antiporter ApNhaP (apnhaP) of Aphanothece halophytica.